The following is a 283-amino-acid chain: 4-hydroxy-3-methylbut-2-enyl diphosphate reductase (283 aa).

Residue Cys-12 participates in [4Fe-4S] cluster binding. Positions 41 and 74 each coordinate (2E)-4-hydroxy-3-methylbut-2-enyl diphosphate. Residues His-41 and His-74 each contribute to the dimethylallyl diphosphate site. His-41 and His-74 together coordinate isopentenyl diphosphate. [4Fe-4S] cluster is bound at residue Cys-96. His-124 contacts (2E)-4-hydroxy-3-methylbut-2-enyl diphosphate. His-124 serves as a coordination point for dimethylallyl diphosphate. His-124 is an isopentenyl diphosphate binding site. Catalysis depends on Glu-126, which acts as the Proton donor. Thr-161 contacts (2E)-4-hydroxy-3-methylbut-2-enyl diphosphate. Residue Cys-189 coordinates [4Fe-4S] cluster. Positions 217, 219, and 261 each coordinate (2E)-4-hydroxy-3-methylbut-2-enyl diphosphate. Residues Ser-217, Asn-219, and Ser-261 each contribute to the dimethylallyl diphosphate site. Isopentenyl diphosphate-binding residues include Ser-217, Asn-219, and Ser-261.

This sequence belongs to the IspH family. [4Fe-4S] cluster is required as a cofactor.

The enzyme catalyses isopentenyl diphosphate + 2 oxidized [2Fe-2S]-[ferredoxin] + H2O = (2E)-4-hydroxy-3-methylbut-2-enyl diphosphate + 2 reduced [2Fe-2S]-[ferredoxin] + 2 H(+). It catalyses the reaction dimethylallyl diphosphate + 2 oxidized [2Fe-2S]-[ferredoxin] + H2O = (2E)-4-hydroxy-3-methylbut-2-enyl diphosphate + 2 reduced [2Fe-2S]-[ferredoxin] + 2 H(+). It participates in isoprenoid biosynthesis; dimethylallyl diphosphate biosynthesis; dimethylallyl diphosphate from (2E)-4-hydroxy-3-methylbutenyl diphosphate: step 1/1. Its pathway is isoprenoid biosynthesis; isopentenyl diphosphate biosynthesis via DXP pathway; isopentenyl diphosphate from 1-deoxy-D-xylulose 5-phosphate: step 6/6. Functionally, catalyzes the conversion of 1-hydroxy-2-methyl-2-(E)-butenyl 4-diphosphate (HMBPP) into a mixture of isopentenyl diphosphate (IPP) and dimethylallyl diphosphate (DMAPP). Acts in the terminal step of the DOXP/MEP pathway for isoprenoid precursor biosynthesis. In Anaeromyxobacter sp. (strain Fw109-5), this protein is 4-hydroxy-3-methylbut-2-enyl diphosphate reductase.